Consider the following 174-residue polypeptide: Methylated-DNA--protein-cysteine methyltransferase (174 aa).

Residue Cys-141 is the Nucleophile; methyl group acceptor of the active site.

Belongs to the MGMT family.

The protein resides in the cytoplasm. It catalyses the reaction a 6-O-methyl-2'-deoxyguanosine in DNA + L-cysteinyl-[protein] = S-methyl-L-cysteinyl-[protein] + a 2'-deoxyguanosine in DNA. It carries out the reaction a 4-O-methyl-thymidine in DNA + L-cysteinyl-[protein] = a thymidine in DNA + S-methyl-L-cysteinyl-[protein]. Functionally, involved in the cellular defense against the biological effects of O6-methylguanine (O6-MeG) and O4-methylthymine (O4-MeT) in DNA. Repairs the methylated nucleobase in DNA by stoichiometrically transferring the methyl group to a cysteine residue in the enzyme. This is a suicide reaction: the enzyme is irreversibly inactivated. The sequence is that of Methylated-DNA--protein-cysteine methyltransferase from Thermococcus kodakarensis (strain ATCC BAA-918 / JCM 12380 / KOD1) (Pyrococcus kodakaraensis (strain KOD1)).